The following is a 337-amino-acid chain: Putative tRNA (cytidine(32)/guanosine(34)-2'-O)-methyltransferase (337 aa).

5 residues coordinate S-adenosyl-L-methionine: G53, W55, D76, D92, and D117. Residue K157 is the Proton acceptor of the active site. 2 stretches are compositionally biased toward basic and acidic residues: residues 304–318 (LKAELSRGKDQKKTP) and 327–337 (ELEKAAEKFQL). A disordered region spans residues 304–337 (LKAELSRGKDQKKTPAENVPSVEELEKAAEKFQL).

This sequence belongs to the class I-like SAM-binding methyltransferase superfamily. RNA methyltransferase RlmE family. TRM7 subfamily.

The protein localises to the cytoplasm. The enzyme catalyses cytidine(32)/guanosine(34) in tRNA + 2 S-adenosyl-L-methionine = 2'-O-methylcytidine(32)/2'-O-methylguanosine(34) in tRNA + 2 S-adenosyl-L-homocysteine + 2 H(+). Methylates the 2'-O-ribose of nucleotides at positions 32 and 34 of the tRNA anticodon loop of substrate tRNAs. This chain is Putative tRNA (cytidine(32)/guanosine(34)-2'-O)-methyltransferase, found in Caenorhabditis elegans.